We begin with the raw amino-acid sequence, 269 residues long: uncharacterized protein (269 aa).

The 69-residue stretch at 5–73 folds into the HTH gntR-type domain; that stretch reads APKWRELADR…RGHGTVVRRK (69 aa). A DNA-binding region (H-T-H motif) is located at residues 33–52; sequence IRDLVEAGEGSKETVHRAYK.

The imp locus inhibits the extrachromosomal maintenance of the Streptomyces plasmid SLP1. This is an uncharacterized protein from Streptomyces coelicolor (strain ATCC BAA-471 / A3(2) / M145).